The following is a 692-amino-acid chain: Potassium-transporting ATPase ATP-binding subunit (692 aa).

A run of 4 helical transmembrane segments spans residues 35–55 (VMFI…KDLY), 64–84 (LQIS…EAIA), 213–233 (IALT…VMSL), and 254–274 (ILIS…LSAI). Aspartate 307 acts as the 4-aspartylphosphate intermediate in catalysis. Residues aspartate 344, glutamate 348, 377–384 (FSASTKMS), and lysine 400 each bind ATP. The Mg(2+) site is built by aspartate 523 and aspartate 527. Transmembrane regions (helical) follow at residues 592 to 612 (YFAI…VGPL), 626 to 646 (AVLS…PLAL), and 672 to 692 (MVIP…LGII).

This sequence belongs to the cation transport ATPase (P-type) (TC 3.A.3) family. Type IA subfamily. As to quaternary structure, the system is composed of three essential subunits: KdpA, KdpB and KdpC.

Its subcellular location is the cell inner membrane. It catalyses the reaction K(+)(out) + ATP + H2O = K(+)(in) + ADP + phosphate + H(+). Part of the high-affinity ATP-driven potassium transport (or Kdp) system, which catalyzes the hydrolysis of ATP coupled with the electrogenic transport of potassium into the cytoplasm. This subunit is responsible for energy coupling to the transport system and for the release of the potassium ions to the cytoplasm. In Leptospira interrogans serogroup Icterohaemorrhagiae serovar Lai (strain 56601), this protein is Potassium-transporting ATPase ATP-binding subunit.